Reading from the N-terminus, the 673-residue chain is Cell division cycle protein 23 homolog (673 aa).

TPR repeat units follow at residues 86-120 (AEMW…VLDN), 159-195 (NKEF…YQEH), 232-267 (EDVW…EPRI), 332-365 (PMII…DPYR), 400-433 (WETC…NPGL), 434-467 (AALW…DPAD), 469-501 (RGWY…KPHD), 502-535 (SRLL…GDVE), 539-572 (LWSL…VTSA), and 577-610 (IYAI…ETLC). A disordered region spans residues 628-673 (SRLPVEEAPGPSNASAAGGQEAMDTEEAPQEGGEEEMSEGEDDFSF). Positions 635-646 (APGPSNASAAGG) are enriched in low complexity. The segment covering 650–673 (MDTEEAPQEGGEEEMSEGEDDFSF) has biased composition (acidic residues).

This sequence belongs to the APC8/CDC23 family. In terms of assembly, the APC/C complex is probably composed of at least 12 subunits: apc-2, apc-10, apc-11, cdc-26, emb-1, emb-27, emb-30, mat-1, mat-2, mat-3, such-1 and gfi-3.

The protein operates within protein modification; protein ubiquitination. Probable component of the anaphase promoting complex/cyclosome (APC/C), a cell cycle-regulated E3 ubiquitin ligase that controls progression through mitosis and the G1 phase of the cell cycle. The APC/C complex acts by mediating ubiquitination and subsequent degradation of target proteins. Developmental role in early embryogenesis and the metaphase to anaphase transition in oocyte and spermatocyte meiosis and mitosis in germ cells. Required for embryonic anterior-posterior axis formation. Plays a role in regulating the abundance of glr-1 receptors in postmitotic neurons, which may in turn control animal locomotion. Involved in regulating GABA neurotransmitter release at neuromuscular junctions in GABA motor neurons. The sequence is that of Cell division cycle protein 23 homolog from Caenorhabditis elegans.